The following is a 212-amino-acid chain: Methylthioribulose-1-phosphate dehydratase (212 aa).

Positions 103 and 105 each coordinate Zn(2+).

The protein belongs to the aldolase class II family. MtnB subfamily. Requires Zn(2+) as cofactor.

The enzyme catalyses 5-(methylsulfanyl)-D-ribulose 1-phosphate = 5-methylsulfanyl-2,3-dioxopentyl phosphate + H2O. The protein operates within amino-acid biosynthesis; L-methionine biosynthesis via salvage pathway; L-methionine from S-methyl-5-thio-alpha-D-ribose 1-phosphate: step 2/6. Catalyzes the dehydration of methylthioribulose-1-phosphate (MTRu-1-P) into 2,3-diketo-5-methylthiopentyl-1-phosphate (DK-MTP-1-P). The sequence is that of Methylthioribulose-1-phosphate dehydratase from Sorangium cellulosum (strain So ce56) (Polyangium cellulosum (strain So ce56)).